We begin with the raw amino-acid sequence, 706 residues long: Fatty acid oxidation complex subunit alpha (706 aa).

The tract at residues methionine 1–proline 188 is enoyl-CoA hydratase. Residues arginine 308–phenylalanine 706 form a 3-hydroxyacyl-CoA dehydrogenase region.

It in the N-terminal section; belongs to the enoyl-CoA hydratase/isomerase family. In the central section; belongs to the 3-hydroxyacyl-CoA dehydrogenase family. Heterotetramer of two alpha chains (FadJ) and two beta chains (FadI).

It is found in the cytoplasm. The catalysed reaction is a (3S)-3-hydroxyacyl-CoA = a (2E)-enoyl-CoA + H2O. The enzyme catalyses a 4-saturated-(3S)-3-hydroxyacyl-CoA = a (3E)-enoyl-CoA + H2O. It catalyses the reaction a (3S)-3-hydroxyacyl-CoA + NAD(+) = a 3-oxoacyl-CoA + NADH + H(+). It carries out the reaction (3S)-3-hydroxybutanoyl-CoA = (3R)-3-hydroxybutanoyl-CoA. It functions in the pathway lipid metabolism; fatty acid beta-oxidation. Catalyzes the formation of a hydroxyacyl-CoA by addition of water on enoyl-CoA. Also exhibits 3-hydroxyacyl-CoA epimerase and 3-hydroxyacyl-CoA dehydrogenase activities. The sequence is that of Fatty acid oxidation complex subunit alpha from Shewanella putrefaciens (strain CN-32 / ATCC BAA-453).